Reading from the N-terminus, the 427-residue chain is Trigger factor (427 aa).

The PPIase FKBP-type domain maps to Gly-163–Pro-248.

This sequence belongs to the FKBP-type PPIase family. Tig subfamily.

The protein localises to the cytoplasm. The enzyme catalyses [protein]-peptidylproline (omega=180) = [protein]-peptidylproline (omega=0). Functionally, involved in protein export. Acts as a chaperone by maintaining the newly synthesized protein in an open conformation. Functions as a peptidyl-prolyl cis-trans isomerase. The polypeptide is Trigger factor (Streptococcus suis (strain 98HAH33)).